The primary structure comprises 609 residues: UvrABC system protein C (609 aa).

A GIY-YIG domain is found at 16 to 94; it reads SSAGVYRMYD…IKQYMPKYNV (79 aa). Residues 203-238 form the UVR domain; the sequence is QQVISALVDKMELAAERQAYEQAARFRDQIMALRKV.

The protein belongs to the UvrC family. Interacts with UvrB in an incision complex.

Its subcellular location is the cytoplasm. In terms of biological role, the UvrABC repair system catalyzes the recognition and processing of DNA lesions. UvrC both incises the 5' and 3' sides of the lesion. The N-terminal half is responsible for the 3' incision and the C-terminal half is responsible for the 5' incision. This chain is UvrABC system protein C, found in Shewanella baltica (strain OS155 / ATCC BAA-1091).